A 166-amino-acid polypeptide reads, in one-letter code: Sec-independent protein translocase protein TatB (166 aa).

The helical transmembrane segment at 2-22 (FDGIGFMELLLIGVLGLVVLG) threads the bilayer. The segment at 69 to 166 (SKGLSNLSPE…DTRSNPKANG (98 aa)) is disordered. Polar residues-rich tracts occupy residues 88–97 (QAAQSVNRPY) and 112–132 (QIYSPVASTVQTSPAQASQAN). Over residues 133 to 153 (PTATVEASPAPASPATPSEPS) the composition is skewed to low complexity. Polar residues predominate over residues 155–166 (GADTRSNPKANG).

This sequence belongs to the TatB family. As to quaternary structure, the Tat system comprises two distinct complexes: a TatABC complex, containing multiple copies of TatA, TatB and TatC subunits, and a separate TatA complex, containing only TatA subunits. Substrates initially bind to the TatABC complex, which probably triggers association of the separate TatA complex to form the active translocon.

The protein localises to the cell inner membrane. Part of the twin-arginine translocation (Tat) system that transports large folded proteins containing a characteristic twin-arginine motif in their signal peptide across membranes. Together with TatC, TatB is part of a receptor directly interacting with Tat signal peptides. TatB may form an oligomeric binding site that transiently accommodates folded Tat precursor proteins before their translocation. This chain is Sec-independent protein translocase protein TatB, found in Shewanella baltica (strain OS155 / ATCC BAA-1091).